A 411-amino-acid chain; its full sequence is Probable protein S-acyltransferase 2 (411 aa).

The next 2 membrane-spanning stretches (helical) occupy residues 56-76 (LTTAMIGGPALTFCIRMVFLI) and 85-105 (SLILLGALLLTVLDFTFLFLT). In terms of domain architecture, DHHC spans 160-210 (KFCDTCLLYRPPRASHCSICNNCVQRFDHHCPWVGQCIALRNYPYFICFIS). Residue cysteine 190 is the S-palmitoyl cysteine intermediate of the active site. 2 helical membrane passes run 205–225 (FICFISTSTLLCLYVFVFSWV) and 245–265 (FVVLILYCFVVVWFVGGLTVF). Residue serine 405 is modified to Phosphoserine.

This sequence belongs to the DHHC palmitoyltransferase family. Expressed in flowers and pollen.

It localises to the cytoplasmic vesicle membrane. It carries out the reaction L-cysteinyl-[protein] + hexadecanoyl-CoA = S-hexadecanoyl-L-cysteinyl-[protein] + CoA. Its function is as follows. Palmitoyl acyltransferase. The polypeptide is Probable protein S-acyltransferase 2 (PAT02) (Arabidopsis thaliana (Mouse-ear cress)).